A 176-amino-acid chain; its full sequence is Ribosome maturation factor RimM (176 aa).

Positions 93–170 constitute a PRC barrel domain; the sequence is DGEYYHADLI…ELPTEIEGDT (78 aa).

Belongs to the RimM family. As to quaternary structure, binds ribosomal protein uS19.

It localises to the cytoplasm. Functionally, an accessory protein needed during the final step in the assembly of 30S ribosomal subunit, possibly for assembly of the head region. Essential for efficient processing of 16S rRNA. May be needed both before and after RbfA during the maturation of 16S rRNA. It has affinity for free ribosomal 30S subunits but not for 70S ribosomes. The protein is Ribosome maturation factor RimM of Rhodopseudomonas palustris (strain BisB5).